Reading from the N-terminus, the 458-residue chain is Flavonol 3-O-glucosyltransferase UGT76E12 (458 aa).

H25 (proton acceptor) is an active-site residue. H25 contacts an anthocyanidin. The active-site Charge relay is D118. UDP-alpha-D-glucose is bound by residues T140, A339, Q341, H356, W359, N360, S361, and E364. G379 contributes to the an anthocyanidin binding site. UDP-alpha-D-glucose-binding residues include D380 and Q381.

Belongs to the UDP-glycosyltransferase family.

The enzyme catalyses a flavonol + UDP-alpha-D-glucose = a flavonol 3-O-beta-D-glucoside + UDP + H(+). The catalysed reaction is a 7-O-hydroxy-flavonol + UDP-alpha-D-glucose = a flavonol 7-O-beta-D-glucoside + UDP + H(+). In terms of biological role, possesses quercetin 3-O-glucosyltransferase and 7-O-glucosyltransferase activities in vitro. The chain is Flavonol 3-O-glucosyltransferase UGT76E12 from Arabidopsis thaliana (Mouse-ear cress).